A 668-amino-acid chain; its full sequence is Trehalase (668 aa).

The interval 1–23 is disordered; it reads MVLQQTEPTDGADRKASDGPLTV.

Belongs to the glycosyl hydrolase 15 family. As to quaternary structure, homomultimer of 20 or more subunits. Mg(2+) is required as a cofactor. The cofactor is phosphate.

The enzyme catalyses alpha,alpha-trehalose + H2O = alpha-D-glucose + beta-D-glucose. The protein operates within glycan degradation; trehalose degradation; D-glucose from alpha,alpha-trehalose: step 1/1. Its activity is regulated as follows. Inhibited by pyrophosphate and polyphosphates. Also competitively inhibited by validoxylamine and castanospermine, but not by trehazolin. In terms of biological role, catalyzes the hydrolysis of alpha,alpha-trehalose into two molecules of D-glucose. Does not hydrolyze maltose, isomaltose, sucrose, cellobiose, p-nitrophenyl-alpha-D-glucopyranoside, and methyl-alpha-D-glucopyranoside. Is also inactive on alpha,beta-trehalose, beta,beta-trehalose, alpha,alpha-trehalose-6,6'-dibehenate, trehalulose, nigerose, and trehalose dimycolate. This chain is Trehalase, found in Mycolicibacterium smegmatis (strain ATCC 700084 / mc(2)155) (Mycobacterium smegmatis).